The sequence spans 352 residues: Putative killer cell immunoglobulin-like receptor-like protein KIR3DX1 (352 aa).

A signal peptide spans 1 to 16; the sequence is MAPKLITVLCLGFCLN. Ig-like C2-type domains are found at residues 17-112 and 224-311; these read QKIC…NSLK and PSLS…VTRC. Cystine bridges form between Cys-49–Cys-94 and Cys-244–Cys-295. A glycan (N-linked (GlcNAc...) asparagine) is linked at Asn-78.

As to expression, expressed in NK-cells.

The protein localises to the secreted. The polypeptide is Putative killer cell immunoglobulin-like receptor-like protein KIR3DX1 (KIR3DX1) (Homo sapiens (Human)).